We begin with the raw amino-acid sequence, 320 residues long: Glutathione synthetase (320 aa).

Residues 130–315 (KIFTSWFPDL…ITGMLLDYIE (186 aa)) enclose the ATP-grasp domain. Residue 156–212 (WEKYQDIIIKPLDAMGGANIFRIKKNDPNFSVIVENMTNYERKYCMVQNYLPEIKLG) participates in ATP binding. Residues E286 and N288 each contribute to the Mg(2+) site.

Belongs to the prokaryotic GSH synthase family. Mg(2+) serves as cofactor. Mn(2+) is required as a cofactor.

The catalysed reaction is gamma-L-glutamyl-L-cysteine + glycine + ATP = glutathione + ADP + phosphate + H(+). It functions in the pathway sulfur metabolism; glutathione biosynthesis; glutathione from L-cysteine and L-glutamate: step 2/2. This Buchnera aphidicola subsp. Acyrthosiphon pisum (strain APS) (Acyrthosiphon pisum symbiotic bacterium) protein is Glutathione synthetase.